A 27-amino-acid chain; its full sequence is Trypsin inhibitor 5 (27 aa).

Intrachain disulfides connect C1–C18, C8–C20, and C14–C26.

It is found in the secreted. Functionally, inhibits trypsin. In Sechium edule (Chayote), this protein is Trypsin inhibitor 5.